The chain runs to 520 residues: MHSTNQSSRLFQYPCKSTSTQYPIFIFPKFSSRKFVKSLRTSIDYKQEGASKEDLVVPSNVARRLPIIIKKSGKVSRYFIKGDSLELLCVDEEEDDSTSFCLGLDDGFWKLIRLTSSAAKDFFLPKQVSDNYISYVKWKFLHRVFSSALQVLATQAMFRAIGIGQSRSLASSAAFNWILKDGLGRLSRCIYTASLASAFDTNLKRVRFSTSVLFSLSIGVELMTPVFPQYFLLLASIANIAKQISLSCYLATGSAVHRSFAVADNLGEVSAKAQIQTVCFDNLGLLLAVLLNMLFQHNQRLQACLPFVLYPIFSTFDLLGIYQGLKHINLQTLTKDRLEIILERWIEFRQVPSPAEVSEEEGIGLLGSRGSKRVWPIRIGCLDPKAQIPTLSMMAMQSLCSDDGYFITMELSSQGFRRIPKSGIVICLREGANSVDVITSLLQTCYIRKSLGANRTKRSYLSFSDLTLQDWTLLTRESKRAARDDNIALNKQMQEQGWIVKNVLLSAEEQIRYIFDKNQL.

2 helical membrane-spanning segments follow: residues 275 to 295 (IQTVCFDNLGLLLAVLLNMLF) and 301 to 321 (LQACLPFVLYPIFSTFDLLGI).

Belongs to the RUS1 family.

Its subcellular location is the membrane. This Arabidopsis thaliana (Mouse-ear cress) protein is Protein root UVB sensitive 4.